Here is a 786-residue protein sequence, read N- to C-terminus: Kazrin-A (786 aa).

Residues 44 to 70 form a disordered region; it reads EEPGEPQEHQQQQQQQNHQDAPVQRQK. Residues 52–62 show a composition bias toward low complexity; that stretch reads HQQQQQQQNHQ. The stretch at 92 to 270 forms a coiled coil; the sequence is LLHEEVLRLQ…SLATLTKDVP (179 aa). The interval 350 to 425 is disordered; the sequence is MSDASVMEGE…LFDDSDSLSS (76 aa). SAM domains are found at residues 457-522, 535-599, and 623-686; these read WRAG…YRDA, DHHW…LHTL, and WTCQ…SEEM. Residues 703-760 are disordered; sequence PLGTPPTLHRQSSLSSSSPSCHDDQQSLRRVKQQLGLSPKNLTARNISHQSRSGSFPR. Over residues 742-758 the composition is skewed to polar residues; sequence KNLTARNISHQSRSGSF.

The protein belongs to the kazrin family.

This Danio rerio (Zebrafish) protein is Kazrin-A (kazna).